We begin with the raw amino-acid sequence, 481 residues long: Thiol protease (481 aa).

The 313-residue stretch at 169–481 (DLREQALSST…ENFWYIAYMY (313 aa)) folds into the Calpain catalytic domain. Residues Cys229, His406, and Asn426 contribute to the active site.

This sequence belongs to the peptidase C2 family.

Its activity is regulated as follows. Inactive below 20 degrees Celsius and pH 6.0. Inhibited by divalent cations. Functionally, thiol protease. Probably an important virulence factor. This chain is Thiol protease (tpr), found in Porphyromonas gingivalis (strain ATCC BAA-308 / W83).